Reading from the N-terminus, the 476-residue chain is Adenosylhomocysteinase (476 aa).

The substrate site is built by Thr67, Asp142, and Glu202. 203–205 lines the NAD(+) pocket; it reads TTT. Lys232 and Asp236 together coordinate substrate. NAD(+) contacts are provided by residues Asn237, 266–271, Glu289, Asn324, 345–347, and Asn390; these read GYGDVG and IGH.

It belongs to the adenosylhomocysteinase family. Requires NAD(+) as cofactor.

The protein resides in the cytoplasm. It carries out the reaction S-adenosyl-L-homocysteine + H2O = L-homocysteine + adenosine. The protein operates within amino-acid biosynthesis; L-homocysteine biosynthesis; L-homocysteine from S-adenosyl-L-homocysteine: step 1/1. May play a key role in the regulation of the intracellular concentration of adenosylhomocysteine. In Prochlorococcus marinus (strain MIT 9211), this protein is Adenosylhomocysteinase.